The following is a 413-amino-acid chain: Probable alpha-tubulin polyglutamylase Ttll1 (413 aa).

Positions Ala2–Thr370 constitute a TTL domain. Residues Ser184–Ile187, Lys197, and Asp199 contribute to the ATP site.

The protein belongs to the tubulin polyglutamylase family.

The protein resides in the cytoplasm. Its subcellular location is the cytoskeleton. The protein localises to the cilium basal body. It is found in the contractile vacuole. Its function is as follows. Probable tubulin polyglutamylase with a strong preference for alpha-tubulin. Modifies alpha-tubulin, generating side chains of glutamate on the gamma-carboxyl groups of specific glutamate residues within the C-terminal tail of alpha-tubulin. The sequence is that of Probable alpha-tubulin polyglutamylase Ttll1 (Ttll1) from Tetrahymena thermophila (strain SB210).